The following is a 419-amino-acid chain: tRNA modification GTPase MnmE (419 aa).

Residues Arg-2, Glu-59, and Arg-99 each coordinate (6S)-5-formyl-5,6,7,8-tetrahydrofolate. Residues 197-343 (GLSVVIAGPP…LHTMIVEMAR (147 aa)) enclose the TrmE-type G domain. K(+) is bound at residue Asn-207. Residues 207–212 (NAGKST), 226–232 (SPVAGTT), and 251–254 (DTAG) each bind GTP. Ser-211 serves as a coordination point for Mg(2+). Residues Ser-226, Val-228, and Thr-231 each contribute to the K(+) site. Thr-232 is a Mg(2+) binding site. Residue Lys-419 participates in (6S)-5-formyl-5,6,7,8-tetrahydrofolate binding.

The protein belongs to the TRAFAC class TrmE-Era-EngA-EngB-Septin-like GTPase superfamily. TrmE GTPase family. In terms of assembly, homodimer. Heterotetramer of two MnmE and two MnmG subunits. The cofactor is K(+).

It localises to the cytoplasm. Functionally, exhibits a very high intrinsic GTPase hydrolysis rate. Involved in the addition of a carboxymethylaminomethyl (cmnm) group at the wobble position (U34) of certain tRNAs, forming tRNA-cmnm(5)s(2)U34. In Sphingopyxis alaskensis (strain DSM 13593 / LMG 18877 / RB2256) (Sphingomonas alaskensis), this protein is tRNA modification GTPase MnmE.